The primary structure comprises 157 residues: SsrA-binding protein (157 aa).

The interval 133–157 (LHDKRESEKKRDWGREKGRLLRARG) is disordered. The span at 135-151 (DKRESEKKRDWGREKGR) shows a compositional bias: basic and acidic residues.

Belongs to the SmpB family.

It localises to the cytoplasm. In terms of biological role, required for rescue of stalled ribosomes mediated by trans-translation. Binds to transfer-messenger RNA (tmRNA), required for stable association of tmRNA with ribosomes. tmRNA and SmpB together mimic tRNA shape, replacing the anticodon stem-loop with SmpB. tmRNA is encoded by the ssrA gene; the 2 termini fold to resemble tRNA(Ala) and it encodes a 'tag peptide', a short internal open reading frame. During trans-translation Ala-aminoacylated tmRNA acts like a tRNA, entering the A-site of stalled ribosomes, displacing the stalled mRNA. The ribosome then switches to translate the ORF on the tmRNA; the nascent peptide is terminated with the 'tag peptide' encoded by the tmRNA and targeted for degradation. The ribosome is freed to recommence translation, which seems to be the essential function of trans-translation. In Bradyrhizobium sp. (strain BTAi1 / ATCC BAA-1182), this protein is SsrA-binding protein.